Reading from the N-terminus, the 334-residue chain is Cyclin N-terminal domain-containing protein 1 (334 aa).

The Cyclin N-terminal domain maps to 29 to 180 (NALLHLAQQN…ILKSLNFQIN (152 aa)).

As to quaternary structure, interacts with PRR19; this interaction promotes crossover formation. Interacts with RFC3 and RFC4; these interactions facilitate crossover formation. Interacts with CDC34; this interaction regulates the cell-cycle progression. Isoform 2 is expressed in spermatocyte.

Its subcellular location is the nucleus. The protein localises to the cytoplasm. It localises to the chromosome. In terms of biological role, plays a role in the different steps of crossover formation during meiotic recombination. Participates in the crossover differentiation step of crossover-specific recombination intermediates through its interaction with PRR19. In addition, stimulates crossover formation through the interactions with RFC3 and RFC4 and simultaneously regulates cell-cycle progression through interactions with CDC34 and subsequent ubiquitination of WEE1. May also participates in an active deselection process that destabilizes or removes excess pre-CO intermediates. This chain is Cyclin N-terminal domain-containing protein 1, found in Mus musculus (Mouse).